The primary structure comprises 383 residues: MRLLSFKKSKIVSIGTELEFQIIDCSSLSLVSRSKELMRALKDMRYRDQIKPEITQSMIEINSSIHQSAKEMYDELLELQKILVETAASIDIAFCGGGTHPFQQWTMQKIFPSKRFKKKFNQYRYLSKRATVFGQHIHIGCPTGDDAIYLTHALARYVPHFIAISASSPFYLGINTNYCSSRSTIFNAFPLSGVIPYLRNWQEFSDYYRKMYRWKIIENMKDFYWDIRPKPELGTIEIRVCDTPLTLRKSILITAYIQALALYLLEEKPVELSHDLYYVYNYNRFQASRHGLEGELTVTDKDRPIPIMDDILETIKKIEQYINELGNNEYIEELYSDVINKQNDSVLINKMYKQDGSFSKLVAAQCELWLSDSKDRKWMTQPS.

It belongs to the glutamate--cysteine ligase type 2 family. YbdK subfamily.

The catalysed reaction is L-cysteine + L-glutamate + ATP = gamma-L-glutamyl-L-cysteine + ADP + phosphate + H(+). In terms of biological role, ATP-dependent carboxylate-amine ligase which exhibits weak glutamate--cysteine ligase activity. This chain is Putative glutamate--cysteine ligase 2-2, found in Legionella pneumophila (strain Lens).